A 515-amino-acid chain; its full sequence is Bifunctional purine biosynthesis protein PurH (515 aa).

Residues Met-1–Val-145 form the MGS-like domain.

Belongs to the PurH family.

The catalysed reaction is (6R)-10-formyltetrahydrofolate + 5-amino-1-(5-phospho-beta-D-ribosyl)imidazole-4-carboxamide = 5-formamido-1-(5-phospho-D-ribosyl)imidazole-4-carboxamide + (6S)-5,6,7,8-tetrahydrofolate. It catalyses the reaction IMP + H2O = 5-formamido-1-(5-phospho-D-ribosyl)imidazole-4-carboxamide. Its pathway is purine metabolism; IMP biosynthesis via de novo pathway; 5-formamido-1-(5-phospho-D-ribosyl)imidazole-4-carboxamide from 5-amino-1-(5-phospho-D-ribosyl)imidazole-4-carboxamide (10-formyl THF route): step 1/1. The protein operates within purine metabolism; IMP biosynthesis via de novo pathway; IMP from 5-formamido-1-(5-phospho-D-ribosyl)imidazole-4-carboxamide: step 1/1. This is Bifunctional purine biosynthesis protein PurH from Streptococcus pneumoniae (strain Taiwan19F-14).